The following is a 229-amino-acid chain: Ribose-5-phosphate isomerase A (229 aa).

Substrate-binding positions include 28-31, 85-88, and 98-101; these read TGST, DGAD, and KGRG. Glu107 acts as the Proton acceptor in catalysis. Residue Lys125 coordinates substrate.

It belongs to the ribose 5-phosphate isomerase family. Homodimer.

It catalyses the reaction aldehydo-D-ribose 5-phosphate = D-ribulose 5-phosphate. It functions in the pathway carbohydrate degradation; pentose phosphate pathway; D-ribose 5-phosphate from D-ribulose 5-phosphate (non-oxidative stage): step 1/1. Catalyzes the reversible conversion of ribose-5-phosphate to ribulose 5-phosphate. The chain is Ribose-5-phosphate isomerase A from Pyrococcus abyssi (strain GE5 / Orsay).